The following is a 489-amino-acid chain: Ribulose bisphosphate carboxylase large chain (489 aa).

Asn128 and Thr178 together coordinate substrate. The active-site Proton acceptor is the Lys180. Lys182 is a substrate binding site. Residues Lys206, Asp208, and Glu209 each contribute to the Mg(2+) site. An N6-carboxylysine modification is found at Lys206. His298 serves as the catalytic Proton acceptor. Positions 299, 331, and 383 each coordinate substrate.

This sequence belongs to the RuBisCO large chain family. Type I subfamily. As to quaternary structure, heterohexadecamer of 8 large chains and 8 small chains. Mg(2+) serves as cofactor.

It catalyses the reaction 2 (2R)-3-phosphoglycerate + 2 H(+) = D-ribulose 1,5-bisphosphate + CO2 + H2O. The catalysed reaction is D-ribulose 1,5-bisphosphate + O2 = 2-phosphoglycolate + (2R)-3-phosphoglycerate + 2 H(+). Its function is as follows. RuBisCO catalyzes two reactions: the carboxylation of D-ribulose 1,5-bisphosphate, the primary event in carbon dioxide fixation, as well as the oxidative fragmentation of the pentose substrate. Both reactions occur simultaneously and in competition at the same active site. The protein is Ribulose bisphosphate carboxylase large chain of Nitrosospira multiformis (strain ATCC 25196 / NCIMB 11849 / C 71).